A 624-amino-acid chain; its full sequence is DNA mismatch repair protein MutL (624 aa).

The tract at residues 416–436 (LTPSVDQPDTGDGENPVAPEK) is disordered.

Belongs to the DNA mismatch repair MutL/HexB family.

Functionally, this protein is involved in the repair of mismatches in DNA. It is required for dam-dependent methyl-directed DNA mismatch repair. May act as a 'molecular matchmaker', a protein that promotes the formation of a stable complex between two or more DNA-binding proteins in an ATP-dependent manner without itself being part of a final effector complex. In Chlorobaculum tepidum (strain ATCC 49652 / DSM 12025 / NBRC 103806 / TLS) (Chlorobium tepidum), this protein is DNA mismatch repair protein MutL.